The primary structure comprises 219 residues: Ribose-5-phosphate isomerase A (219 aa).

Substrate contacts are provided by residues 28–31 (TGST), 81–84 (DGAD), and 94–97 (KGGG). Glu-103 (proton acceptor) is an active-site residue. Lys-121 is a substrate binding site.

It belongs to the ribose 5-phosphate isomerase family. As to quaternary structure, homodimer.

It catalyses the reaction aldehydo-D-ribose 5-phosphate = D-ribulose 5-phosphate. The protein operates within carbohydrate degradation; pentose phosphate pathway; D-ribose 5-phosphate from D-ribulose 5-phosphate (non-oxidative stage): step 1/1. Its function is as follows. Catalyzes the reversible conversion of ribose-5-phosphate to ribulose 5-phosphate. This Shewanella sp. (strain MR-4) protein is Ribose-5-phosphate isomerase A.